Reading from the N-terminus, the 378-residue chain is Deoxyguanosinetriphosphate triphosphohydrolase-like protein (378 aa).

The interval 1–28 is disordered; it reads MLAPFACQPGESRGRQKPESMSTFRSPF. The 137-residue stretch at 62–198 folds into the HD domain; that stretch reads RLTHSIEVAQ…AAIADDVAYS (137 aa).

Belongs to the dGTPase family. Type 2 subfamily.

The chain is Deoxyguanosinetriphosphate triphosphohydrolase-like protein from Cereibacter sphaeroides (strain ATCC 17029 / ATH 2.4.9) (Rhodobacter sphaeroides).